A 675-amino-acid polypeptide reads, in one-letter code: G-protein-signaling modulator 1 (675 aa).

Residues 1–509 are mediates association with membranes; that stretch reads MAGPAPPVAD…DLLTKFQSSR (509 aa). TPR repeat units follow at residues 28–61, 66–99, 106–139, 146–181, 183–202, 209–242, 249–282, 289–322, and 329–362; these read CLELALEGERLCKAGDFKTGVAFFEAAVQVGTED, SAIYSQLGNAYFYLKEHGRALEYHKHDLLLARTI, AKASGNLGNTLKVLGRFDEAAVCCQRHLSIAQEQ, ARALYNIGNVYHAKGKQLSWNAANATQDPGHLPPDV, ETLCKASEFYERNLSLVKEL, GRAYGNLGNTHYLLGNFTEATTFHKERLAIAKEF, RRAYSNLGNAHVFLGRFDVAAEYYKKTLQLSRQL, AQACYSLGNTYTLLQDYERAAEYHLRHLLIAQEL, and GRACWSLGNAYVSMGRPAQALTFAKKHLQISQEI. Residues 364–487 are interaction with STK11/LKB1; that stretch reads DRHGELTARM…VRVHVPRTSI (124 aa). Residues 391-412 are disordered; it reads SEKPDLAGYEAQGARPKRTQRL. Ser-413 is subject to Phosphoserine. Arg-421 is subject to Omega-N-methylarginine. Basic and acidic residues predominate over residues 424–442; sequence LEREQNGDSHHSGDWRGPS. A disordered region spans residues 424-492; that stretch reads LEREQNGDSH…PRTSIPRAPS (69 aa). A phosphoserine mark is found at Ser-445, Ser-469, Ser-471, Ser-492, and Ser-493. Residues 454–469 are compositionally biased toward basic and acidic residues; that stretch reads KYQEGPDAERRPREGS. The GoLoco 1 domain occupies 495–517; sequence EECFFDLLTKFQSSRMDDQRCPL. Phosphoserine occurs at positions 545 and 569. GoLoco domains are found at residues 548 to 570, 596 to 618, and 630 to 652; these read TEEFFDLIASSQSRRLDDQRASV, GDDFFNMLIKYQSSRIDDQRCPP, and DEDFFSLIQRVQAKRMDEQRVDL. 2 disordered regions span residues 610–630 and 644–675; these read RIDDQRCPPPDVLPRGPTMPD and RMDEQRVDLAGGPEQGAGGPPEPQQQCQPGAS.

It belongs to the GPSM family. In terms of assembly, interacts with GNAI1, GNAI2 and GNAI3 preferentially in their GDP-bound state. May also interact with GNAO1. Interacts with STK11/LKB1 and MACF1. Interacts with INSC/inscuteable and FRMPD1. Phosphorylation regulates interaction with G(i/o) alpha. As to expression, expressed in intestinal cells.

The protein localises to the cytoplasm. Its subcellular location is the cytosol. It localises to the endoplasmic reticulum membrane. It is found in the golgi apparatus membrane. The protein resides in the cell membrane. In terms of biological role, guanine nucleotide dissociation inhibitor (GDI) which functions as a receptor-independent activator of heterotrimeric G-protein signaling. Keeps G(i/o) alpha subunit in its GDP-bound form thus uncoupling heterotrimeric G-proteins signaling from G protein-coupled receptors. Controls spindle orientation and asymmetric cell fate of cerebral cortical progenitors. May also be involved in macroautophagy in intestinal cells. May play a role in drug addiction. The sequence is that of G-protein-signaling modulator 1 (GPSM1) from Homo sapiens (Human).